The following is a 278-amino-acid chain: uncharacterized protein (278 aa).

The span at 1 to 11 shows a compositional bias: basic and acidic residues; sequence MMIHIHQDKKM. Disordered regions lie at residues 1-107 and 206-278; these read MMIH…RYFK and KVSA…KASR. Over residues 62–94 the composition is skewed to low complexity; that stretch reads KQSGGKNAKSGSKSAKSGSKSAKSGSKTSKTQS. Residues 97–107 are compositionally biased toward basic and acidic residues; it reads KGDESRDRYFK. Residues 249-260 are compositionally biased toward polar residues; it reads SAKNAKSTGNKK. The segment covering 264–278 has biased composition (low complexity); the sequence is KSAGAKKAPAAKASR.

This is an uncharacterized protein from Acanthamoeba polyphaga mimivirus (APMV).